We begin with the raw amino-acid sequence, 256 residues long: 5-keto-4-deoxy-D-glucarate aldolase (256 aa).

His50 functions as the Proton acceptor in the catalytic mechanism. Gln151 provides a ligand contact to substrate. Glu153 is a binding site for Mg(2+). Ser178 and Asp179 together coordinate substrate. Position 179 (Asp179) interacts with Mg(2+).

It belongs to the HpcH/HpaI aldolase family. KDGluc aldolase subfamily. As to quaternary structure, homohexamer; trimer of dimers. It depends on Mg(2+) as a cofactor.

The catalysed reaction is 5-dehydro-4-deoxy-D-glucarate = 2-hydroxy-3-oxopropanoate + pyruvate. It catalyses the reaction 2-dehydro-3-deoxy-D-glucarate = 2-hydroxy-3-oxopropanoate + pyruvate. It functions in the pathway carbohydrate acid metabolism; galactarate degradation; D-glycerate from galactarate: step 2/3. In terms of biological role, catalyzes the reversible retro-aldol cleavage of both 5-keto-4-deoxy-D-glucarate and 2-keto-3-deoxy-D-glucarate to pyruvate and tartronic semialdehyde. The protein is 5-keto-4-deoxy-D-glucarate aldolase of Escherichia coli O157:H7 (strain EC4115 / EHEC).